Here is a 354-residue protein sequence, read N- to C-terminus: Protein-arginine kinase (354 aa).

In terms of domain architecture, Phosphagen kinase C-terminal spans 24 to 254 (IVLSSRIRLA…QQIIHQEKTA (231 aa)). ATP contacts are provided by residues 27–31 (SSRIR), His92, Arg125, 176–180 (RASVM), and 207–212 (RGIYGE). Residues 337–342 (RDYRRA) carry the RDXXRA motif of the pArg binding pocket involved in allosteric regulation motif.

The protein belongs to the ATP:guanido phosphotransferase family.

The enzyme catalyses L-arginyl-[protein] + ATP = N(omega)-phospho-L-arginyl-[protein] + ADP + H(+). Appears to be allosterically activated by the binding of pArg-containing polypeptides to the pArg-binding pocket localized in the C-terminal domain of McsB. Functionally, catalyzes the specific phosphorylation of arginine residues in a large number of proteins. Is part of the bacterial stress response system. Protein arginine phosphorylation has a physiologically important role and is involved in the regulation of many critical cellular processes, such as protein homeostasis, motility, competence, and stringent and stress responses, by regulating gene expression and protein activity. This Bacillus mycoides (strain KBAB4) (Bacillus weihenstephanensis) protein is Protein-arginine kinase.